We begin with the raw amino-acid sequence, 474 residues long: uncharacterized protein (474 aa).

The next 10 helical transmembrane spans lie at 17 to 39 (ILGG…SVYY), 44 to 61 (FLNF…GFVL), 81 to 103 (LAWL…YFSY), 144 to 166 (GVGI…YLLY), 186 to 208 (IIWI…GLSF), 239 to 256 (IVMI…FSIH), 268 to 286 (IQTK…IISI), 319 to 341 (LSLF…TGGV), 385 to 407 (AFVV…IALG), and 444 to 466 (IIAM…TLYF).

The protein belongs to the TrkH potassium transport family.

It is found in the cell membrane. This is an uncharacterized protein from Methanocaldococcus jannaschii (strain ATCC 43067 / DSM 2661 / JAL-1 / JCM 10045 / NBRC 100440) (Methanococcus jannaschii).